A 173-amino-acid polypeptide reads, in one-letter code: Mesencephalic astrocyte-derived neurotrophic factor homolog (173 aa).

A signal peptide spans 1–22; sequence MKTWYMVVVIGFLATLVQTSLA. Cystine bridges form between Cys-28–Cys-114, Cys-31–Cys-103, Cys-61–Cys-72, and Cys-148–Cys-151.

This sequence belongs to the ARMET family.

The protein resides in the secreted. Its function is as follows. Required during the maturation of the embryonic nervous system for maintenance of neuronal and cuticular connectivity. Essential for maintenance of dopaminergic neurons and dopamine levels. This Drosophila yakuba (Fruit fly) protein is Mesencephalic astrocyte-derived neurotrophic factor homolog.